A 172-amino-acid chain; its full sequence is WW domain binding protein VOPP1 (172 aa).

The signal sequence occupies residues 1–22; the sequence is MRRQPAKVAALLLGLLLECTEA. Over 23-60 the chain is Extracellular; that stretch reads KKHCWYFEGLYPTYYICRSYEDCCGSRCCVRALSIQRL. The chain crosses the membrane as a helical span at residues 61–81; the sequence is WYFWFLLMMGVLFCCGAGFFI. Residues 82–172 are Cytoplasmic-facing; the sequence is RRRMYPPPLI…PPYEQVVKAK (91 aa). Residues 102–153 form a disordered region; sequence RQPPNPGPGAQQPGPPYYTDPGGPGMNPVGNSMAMAFQVPPNSPQGSVACPP. Over residues 104–119 the composition is skewed to pro residues; it reads PPNPGPGAQQPGPPYY.

This sequence belongs to the VOPP1/ECOP family. As to quaternary structure, interacts with WWOX (via WW domain). As to expression, widely expressed with highest levels in thymus and ovary.

It is found in the cytoplasmic vesicle membrane. The protein localises to the late endosome membrane. The protein resides in the lysosome membrane. Increases the transcriptional activity of NFKB1 by facilitating its nuclear translocation, DNA-binding and associated apoptotic response, when overexpressed. May sequester WWOX in lysosomal vesicles and thereby regulate WWOX role as tumor suppressor. In Homo sapiens (Human), this protein is WW domain binding protein VOPP1.